A 405-amino-acid polypeptide reads, in one-letter code: MSAQPISDFHAYPDAAGHFGKFGGRFVAETLIAPLQELSAAYDLARQDPAFIAEYDKDLKHYVGRPSPIYHAERLSREVGGAQILLKREDLNHTGAHKINNTIGQALLASRMGKTRIIAETGAGQHGVASATVAARLGLECVVYMGATDIERQKINVYRMQLLGAKVIPVTSGSATLKDALNEAMRDWVSNVQDTFYIIGTVAGPDPYPRMVRDFNAIVGREARAQMLEDYGRLPDAISACVGGGSNAIGLFHAFLNDPGVKIYGAEAAGDGIASGRHAASIAAGRPGVLHGNRTYVICDDDGQIIETHSVSAGLDYPGVGPEHAFLSDSGRAVYQGITDDEALAAFHLLAHTEGILAALESSHAVAQSIKLAREMPKDALVLCNLSGRGDKDVHTIAAREGMVL.

An N6-(pyridoxal phosphate)lysine modification is found at Lys-98.

This sequence belongs to the TrpB family. As to quaternary structure, tetramer of two alpha and two beta chains. The cofactor is pyridoxal 5'-phosphate.

The enzyme catalyses (1S,2R)-1-C-(indol-3-yl)glycerol 3-phosphate + L-serine = D-glyceraldehyde 3-phosphate + L-tryptophan + H2O. Its pathway is amino-acid biosynthesis; L-tryptophan biosynthesis; L-tryptophan from chorismate: step 5/5. In terms of biological role, the beta subunit is responsible for the synthesis of L-tryptophan from indole and L-serine. The sequence is that of Tryptophan synthase beta chain from Xanthomonas campestris pv. campestris (strain 8004).